The following is a 302-amino-acid chain: Glycine--tRNA ligase alpha subunit (302 aa).

The protein belongs to the class-II aminoacyl-tRNA synthetase family. As to quaternary structure, tetramer of two alpha and two beta subunits.

It localises to the cytoplasm. The catalysed reaction is tRNA(Gly) + glycine + ATP = glycyl-tRNA(Gly) + AMP + diphosphate. This Baumannia cicadellinicola subsp. Homalodisca coagulata protein is Glycine--tRNA ligase alpha subunit.